The following is a 193-amino-acid chain: Orotate phosphoribosyltransferase (193 aa).

116 to 124 (EDVVTTGKS) provides a ligand contact to 5-phospho-alpha-D-ribose 1-diphosphate. Orotate-binding residues include threonine 120 and arginine 148.

It belongs to the purine/pyrimidine phosphoribosyltransferase family. PyrE subfamily. In terms of assembly, homodimer. The cofactor is Mg(2+).

The enzyme catalyses orotidine 5'-phosphate + diphosphate = orotate + 5-phospho-alpha-D-ribose 1-diphosphate. The protein operates within pyrimidine metabolism; UMP biosynthesis via de novo pathway; UMP from orotate: step 1/2. In terms of biological role, catalyzes the transfer of a ribosyl phosphate group from 5-phosphoribose 1-diphosphate to orotate, leading to the formation of orotidine monophosphate (OMP). This chain is Orotate phosphoribosyltransferase, found in Clostridium tetani (strain Massachusetts / E88).